The following is a 305-amino-acid chain: Aurasperone B biosynthesis cluster protein A (305 aa).

The first 26 residues, M1–G26, serve as a signal peptide directing secretion. N-linked (GlcNAc...) asparagine glycans are attached at residues N29, N34, N64, N83, N132, N183, N218, and N288.

The protein belongs to the bfoA family.

In terms of biological role, part of the gene cluster that mediates the biosynthesis of aurasperone B, a dimeric gamma-naphthopyrone. The first step in the biosynthesis of aurasperone B is the production of gamma-naphthopyrone precursor YWA1 by the non-reducing polyketide synthase albA, via condensation of one acetyl-CoA starter unit with 6 malonyl-CoA units. YWA1 is then methylated by aunE at position C-6 to yield foncesin which is further methylated at position C-8 by aunD to produce fonsecin B. A key enzyme in the biosynthetic pathway is the cytochrome P450 monooxygenase aunB which catalyzes the oxidative dimerization of fonsecin B to aurasperone B. AunB also catalyzes the oxidative dimerization of rubrofusarin B into aurasperone A. The sequence is that of Aurasperone B biosynthesis cluster protein A from Aspergillus niger (strain ATCC MYA-4892 / CBS 513.88 / FGSC A1513).